A 237-amino-acid chain; its full sequence is tRNA (guanine-N(7)-)-methyltransferase (237 aa).

4 residues coordinate S-adenosyl-L-methionine: glutamate 65, glutamate 90, aspartate 117, and aspartate 140. Aspartate 140 is an active-site residue. Substrate-binding positions include lysine 144, aspartate 176, and 212 to 215; that span reads TKFE. Residues 197-217 form a disordered region; sequence TCGPRQFSPRGERPETKFERR. Over residues 206 to 217 the composition is skewed to basic and acidic residues; that stretch reads RGERPETKFERR.

The protein belongs to the class I-like SAM-binding methyltransferase superfamily. TrmB family.

It carries out the reaction guanosine(46) in tRNA + S-adenosyl-L-methionine = N(7)-methylguanosine(46) in tRNA + S-adenosyl-L-homocysteine. Its pathway is tRNA modification; N(7)-methylguanine-tRNA biosynthesis. In terms of biological role, catalyzes the formation of N(7)-methylguanine at position 46 (m7G46) in tRNA. This chain is tRNA (guanine-N(7)-)-methyltransferase, found in Alkalilimnicola ehrlichii (strain ATCC BAA-1101 / DSM 17681 / MLHE-1).